We begin with the raw amino-acid sequence, 21 residues long: Peptide PGLa-B2 (21 aa).

Leucine amide is present on L21.

In terms of tissue distribution, expressed by the skin glands.

The protein localises to the secreted. Its function is as follows. Has antimicrobial activity against Gram-negative bacterium E.coli ATCC 25922 (MIC=25 uM), Gram-positive bacterium S.auerus ATCC 25923 (MIC=50 uM) and against fungus C.albicans ATCC 90028 (MIC=25 uM). Has some hemolytic activity against human erythrocytes at high concentration. The sequence is that of Peptide PGLa-B2 from Xenopus borealis (Kenyan clawed frog).